A 436-amino-acid chain; its full sequence is Adenylosuccinate synthetase (436 aa).

Residues 12-18 (GDEGKGK) and 40-42 (GHT) contribute to the GTP site. Catalysis depends on aspartate 13, which acts as the Proton acceptor. Residues aspartate 13 and glycine 40 each contribute to the Mg(2+) site. Residues 13-16 (DEGK), 38-41 (NAGH), threonine 128, arginine 142, glutamine 223, threonine 238, and arginine 302 each bind IMP. The Proton donor role is filled by histidine 41. Residue 298–304 (TTTGRRR) coordinates substrate. GTP contacts are provided by residues arginine 304, 330–332 (KLD), and 412–414 (SLG).

It belongs to the adenylosuccinate synthetase family. As to quaternary structure, homodimer. The cofactor is Mg(2+).

Its subcellular location is the cytoplasm. It catalyses the reaction IMP + L-aspartate + GTP = N(6)-(1,2-dicarboxyethyl)-AMP + GDP + phosphate + 2 H(+). The protein operates within purine metabolism; AMP biosynthesis via de novo pathway; AMP from IMP: step 1/2. Functionally, plays an important role in the de novo pathway of purine nucleotide biosynthesis. Catalyzes the first committed step in the biosynthesis of AMP from IMP. This chain is Adenylosuccinate synthetase, found in Prochlorococcus marinus (strain AS9601).